Consider the following 363-residue polypeptide: Fructose-bisphosphate aldolase A (363 aa).

Arg-43 is a beta-D-fructose 1,6-bisphosphate binding site. Catalysis depends on Glu-188, which acts as the Proton acceptor. Lys-230 functions as the Schiff-base intermediate with dihydroxyacetone-P in the catalytic mechanism. Beta-D-fructose 1,6-bisphosphate is bound by residues 272–274 (SGG), Ser-301, and Arg-304.

It belongs to the class I fructose-bisphosphate aldolase family. Tetramer.

The catalysed reaction is beta-D-fructose 1,6-bisphosphate = D-glyceraldehyde 3-phosphate + dihydroxyacetone phosphate. It functions in the pathway carbohydrate degradation; glycolysis; D-glyceraldehyde 3-phosphate and glycerone phosphate from D-glucose: step 4/4. In terms of biological role, plays a key role in glycolysis and gluconeogenesis. This chain is Fructose-bisphosphate aldolase A, found in Salmo salar (Atlantic salmon).